We begin with the raw amino-acid sequence, 123 residues long: MATINQLVRQPRKRIVEKSDVPALQNCPQRRGVCTRVYTTTPKKPNSALRKVCRVRLTNGFEVSSYIGGEGHNLQEHSVVLIRGGRVKDLPGVRYHTVRGSLDTSGVKGRNQGRSKYGTKRPK.

Position 89 is a 3-methylthioaspartic acid (aspartate 89). Residues 100 to 123 (GSLDTSGVKGRNQGRSKYGTKRPK) form a disordered region. The span at 111 to 123 (NQGRSKYGTKRPK) shows a compositional bias: basic residues.

The protein belongs to the universal ribosomal protein uS12 family. In terms of assembly, part of the 30S ribosomal subunit. Contacts proteins S8 and S17. May interact with IF1 in the 30S initiation complex.

Its function is as follows. With S4 and S5 plays an important role in translational accuracy. Functionally, interacts with and stabilizes bases of the 16S rRNA that are involved in tRNA selection in the A site and with the mRNA backbone. Located at the interface of the 30S and 50S subunits, it traverses the body of the 30S subunit contacting proteins on the other side and probably holding the rRNA structure together. The combined cluster of proteins S8, S12 and S17 appears to hold together the shoulder and platform of the 30S subunit. This is Small ribosomal subunit protein uS12 from Pseudomonas fluorescens (strain ATCC BAA-477 / NRRL B-23932 / Pf-5).